Here is a 485-residue protein sequence, read N- to C-terminus: Glutamyl-tRNA(Gln) amidotransferase subunit A (485 aa).

Catalysis depends on charge relay system residues Lys-78 and Ser-153. The active-site Acyl-ester intermediate is the Ser-177.

This sequence belongs to the amidase family. GatA subfamily. Heterotrimer of A, B and C subunits.

It catalyses the reaction L-glutamyl-tRNA(Gln) + L-glutamine + ATP + H2O = L-glutaminyl-tRNA(Gln) + L-glutamate + ADP + phosphate + H(+). Its function is as follows. Allows the formation of correctly charged Gln-tRNA(Gln) through the transamidation of misacylated Glu-tRNA(Gln) in organisms which lack glutaminyl-tRNA synthetase. The reaction takes place in the presence of glutamine and ATP through an activated gamma-phospho-Glu-tRNA(Gln). This chain is Glutamyl-tRNA(Gln) amidotransferase subunit A, found in Geobacter metallireducens (strain ATCC 53774 / DSM 7210 / GS-15).